The chain runs to 328 residues: Tetraacyldisaccharide 4'-kinase (328 aa).

55-62 (TAGGNGKT) provides a ligand contact to ATP.

It belongs to the LpxK family.

The catalysed reaction is a lipid A disaccharide + ATP = a lipid IVA + ADP + H(+). The protein operates within glycolipid biosynthesis; lipid IV(A) biosynthesis; lipid IV(A) from (3R)-3-hydroxytetradecanoyl-[acyl-carrier-protein] and UDP-N-acetyl-alpha-D-glucosamine: step 6/6. Transfers the gamma-phosphate of ATP to the 4'-position of a tetraacyldisaccharide 1-phosphate intermediate (termed DS-1-P) to form tetraacyldisaccharide 1,4'-bis-phosphate (lipid IVA). This chain is Tetraacyldisaccharide 4'-kinase, found in Escherichia coli O127:H6 (strain E2348/69 / EPEC).